A 156-amino-acid chain; its full sequence is CASP-like protein 5C1 (156 aa).

Over 1-24 (MENRERAGAGAVGSAGSLGLRVEQ) the chain is Cytoplasmic. Residues 25-45 (AVFSSASLLFMSVGVEFFSYT) traverse the membrane as a helical segment. Position 46 (alanine 46) is a topological domain, extracellular. The chain crosses the membrane as a helical span at residues 47–67 (FCFLVTIMGLVIPWSCTLAMI). Over 68 to 81 (DVYSILVGCPLRVP) the chain is Cytoplasmic. Residues 82 to 102 (GVMVIVVIGDWVLAILSLAAA) form a helical membrane-spanning segment. Topologically, residues 103–132 (SSSAAVIDLLLQFHGSHCSPRFCGRYQLSA) are extracellular. A helical membrane pass occupies residues 133–153 (MMAFLSWFLTAASSLFNLWFI). The Cytoplasmic segment spans residues 154–156 (ASR).

The protein belongs to the Casparian strip membrane proteins (CASP) family. In terms of assembly, homodimer and heterodimers.

The protein resides in the cell membrane. This chain is CASP-like protein 5C1, found in Oryza sativa subsp. indica (Rice).